A 227-amino-acid chain; its full sequence is MSEVTLKIEGLRKTYLAGTPGEVAVLRGVDLTLHAGEVVALVAPSGAGKSTLLQIAGLLDVADAGRVEIAGQDMAGARDRKRTRVRRQDVGFVYQFHHLLPEFSALENIVLPQLANGISQRDAEARGAELLALVGLETRAAHRPAALSGGEQQRVAFCRALANRPRLLLADEPTGNLDPATSDQVFEVLMQLVSETGLSALIATHNLELAARMDRVLHLEDGVLVER.

Positions Leu-6 to Arg-227 constitute an ABC transporter domain. Residue Ala-43–Ser-50 participates in ATP binding.

The protein belongs to the ABC transporter superfamily. Lipoprotein translocase (TC 3.A.1.125) family. In terms of assembly, the complex is composed of two ATP-binding proteins (LolD) and two transmembrane proteins (LolC and LolE).

Its subcellular location is the cell inner membrane. In terms of biological role, part of the ABC transporter complex LolCDE involved in the translocation of mature outer membrane-directed lipoproteins, from the inner membrane to the periplasmic chaperone, LolA. Responsible for the formation of the LolA-lipoprotein complex in an ATP-dependent manner. The sequence is that of Lipoprotein-releasing system ATP-binding protein LolD from Ruegeria sp. (strain TM1040) (Silicibacter sp.).